The sequence spans 515 residues: 2-isopropylmalate synthase (515 aa).

A Pyruvate carboxyltransferase domain is found at 5-267 (VIIFDTTLRD…HTNLKHDEIH (263 aa)). Mn(2+) contacts are provided by aspartate 14, histidine 202, histidine 204, and asparagine 238. Residues 392-515 (KLNYLSVQSG…EIKQKKVETV (124 aa)) form a regulatory domain region.

It belongs to the alpha-IPM synthase/homocitrate synthase family. LeuA type 1 subfamily. In terms of assembly, homodimer. It depends on Mn(2+) as a cofactor.

Its subcellular location is the cytoplasm. The catalysed reaction is 3-methyl-2-oxobutanoate + acetyl-CoA + H2O = (2S)-2-isopropylmalate + CoA + H(+). It participates in amino-acid biosynthesis; L-leucine biosynthesis; L-leucine from 3-methyl-2-oxobutanoate: step 1/4. Its function is as follows. Catalyzes the condensation of the acetyl group of acetyl-CoA with 3-methyl-2-oxobutanoate (2-ketoisovalerate) to form 3-carboxy-3-hydroxy-4-methylpentanoate (2-isopropylmalate). The sequence is that of 2-isopropylmalate synthase from Aliivibrio fischeri (strain MJ11) (Vibrio fischeri).